The chain runs to 368 residues: Isopentenyl-diphosphate delta-isomerase (368 aa).

Position 7 to 8 (7 to 8) interacts with substrate; sequence RK. FMN contacts are provided by residues threonine 65, 66–68, serine 96, and asparagine 125; that span reads GMT. Residue 96–98 coordinates substrate; sequence SQR. Glutamine 160 serves as a coordination point for substrate. Residue glutamate 161 participates in Mg(2+) binding. FMN-binding positions include lysine 193, serine 218, threonine 223, 275 to 277, and 296 to 297; these read GIR and AL.

The protein belongs to the IPP isomerase type 2 family. Homooctamer. Dimer of tetramers. FMN is required as a cofactor. It depends on NADPH as a cofactor. The cofactor is Mg(2+).

It is found in the cytoplasm. It carries out the reaction isopentenyl diphosphate = dimethylallyl diphosphate. In terms of biological role, involved in the biosynthesis of isoprenoids. Catalyzes the 1,3-allylic rearrangement of the homoallylic substrate isopentenyl (IPP) to its allylic isomer, dimethylallyl diphosphate (DMAPP). The sequence is that of Isopentenyl-diphosphate delta-isomerase from Saccharolobus shibatae (strain ATCC 51178 / DSM 5389 / JCM 8931 / NBRC 15437 / B12) (Sulfolobus shibatae).